A 157-amino-acid chain; its full sequence is SsrA-binding protein (157 aa).

Residues 136–151 (KRETEKKRDWSREKGR) show a composition bias toward basic and acidic residues. The interval 136–157 (KRETEKKRDWSREKGRLLRARG) is disordered.

It belongs to the SmpB family.

Its subcellular location is the cytoplasm. Required for rescue of stalled ribosomes mediated by trans-translation. Binds to transfer-messenger RNA (tmRNA), required for stable association of tmRNA with ribosomes. tmRNA and SmpB together mimic tRNA shape, replacing the anticodon stem-loop with SmpB. tmRNA is encoded by the ssrA gene; the 2 termini fold to resemble tRNA(Ala) and it encodes a 'tag peptide', a short internal open reading frame. During trans-translation Ala-aminoacylated tmRNA acts like a tRNA, entering the A-site of stalled ribosomes, displacing the stalled mRNA. The ribosome then switches to translate the ORF on the tmRNA; the nascent peptide is terminated with the 'tag peptide' encoded by the tmRNA and targeted for degradation. The ribosome is freed to recommence translation, which seems to be the essential function of trans-translation. This is SsrA-binding protein from Rhodopseudomonas palustris (strain HaA2).